We begin with the raw amino-acid sequence, 59 residues long: UPF0391 membrane protein lpl2443 (59 aa).

2 helical membrane passes run 5–25 (ALIF…GIAV) and 30–50 (IAKI…IMGL).

The protein belongs to the UPF0391 family.

It is found in the cell membrane. This is UPF0391 membrane protein lpl2443 from Legionella pneumophila (strain Lens).